The primary structure comprises 640 residues: Threonine--tRNA ligase (640 aa).

One can recognise a TGS domain in the interval 1 to 61; it reads MPIITLPNGD…TEDSTLQIIT (61 aa). Positions 242 to 533 are catalytic; sequence DHRKIGKALD…LIEHYAGFMP (292 aa). C333, H384, and H510 together coordinate Zn(2+).

This sequence belongs to the class-II aminoacyl-tRNA synthetase family. Homodimer. The cofactor is Zn(2+).

It localises to the cytoplasm. It catalyses the reaction tRNA(Thr) + L-threonine + ATP = L-threonyl-tRNA(Thr) + AMP + diphosphate + H(+). In terms of biological role, catalyzes the attachment of threonine to tRNA(Thr) in a two-step reaction: L-threonine is first activated by ATP to form Thr-AMP and then transferred to the acceptor end of tRNA(Thr). Also edits incorrectly charged L-seryl-tRNA(Thr). In Acinetobacter baumannii (strain AB0057), this protein is Threonine--tRNA ligase.